A 185-amino-acid chain; its full sequence is Ribonuclease M5 (185 aa).

Residues 3–84 (KEVIVVEGRD…KHARISQSEG (82 aa)) form the Toprim domain. Glutamate 9, aspartate 55, and aspartate 57 together coordinate Mg(2+).

This sequence belongs to the ribonuclease M5 family. Mg(2+) serves as cofactor.

Its subcellular location is the cytoplasm. It catalyses the reaction Endonucleolytic cleavage of RNA, removing 21 and 42 nucleotides, respectively, from the 5'- and 3'-termini of a 5S-rRNA precursor.. Required for correct processing of both the 5' and 3' ends of 5S rRNA precursor. Cleaves both sides of a double-stranded region yielding mature 5S rRNA in one step. This chain is Ribonuclease M5, found in Clostridium acetobutylicum (strain ATCC 824 / DSM 792 / JCM 1419 / IAM 19013 / LMG 5710 / NBRC 13948 / NRRL B-527 / VKM B-1787 / 2291 / W).